Reading from the N-terminus, the 430-residue chain is DD-carboxypeptidase/endopeptidase Mpg (430 aa).

Residues His-295, Asp-299, and His-375 each contribute to the Zn(2+) site.

The protein belongs to the peptidase M23B family. In terms of assembly, monomer. It depends on Zn(2+) as a cofactor. In terms of processing, likely to be synthesized as a proenzyme. The cleavage of the N-terminal domain is probably required for the activation of the enzyme.

The protein resides in the cell outer membrane. Has both endopeptidase and DD-carboxypeptidase activities. Degrades cell wall peptidoglycan (PG) to allow consummate expression of pili. This is DD-carboxypeptidase/endopeptidase Mpg from Neisseria meningitidis serogroup B (strain ATCC BAA-335 / MC58).